A 329-amino-acid polypeptide reads, in one-letter code: 4-methyl-2-oxopentanoate reductase A (329 aa).

NAD(+) is bound by residues 162-163 (GI), 240-242 (TAR), and Asp266. Arg242 is an active-site residue. Glu271 is an active-site residue. Catalysis depends on His289, which acts as the Proton donor.

This sequence belongs to the D-isomer specific 2-hydroxyacid dehydrogenase family.

It carries out the reaction (2R)-hydroxy-4-methylpentanoate + NADP(+) = 4-methyl-2-oxopentanoate + NADPH + H(+). It catalyses the reaction a (2R)-2-hydroxycarboxylate + NADP(+) = a 2-oxocarboxylate + NADPH + H(+). In terms of biological role, 4-methyl-2-oxopentanoate (MOA) reductase that reduces MOA, a possible intermediate in leucine synthesis, to D-leucate in a NADPH- or NADH-dependent manner, but with a preference for NADPH. In addition to MOA, shows broad substrate specificity toward 2-keto acids. The protein is 4-methyl-2-oxopentanoate reductase A of Aspergillus oryzae (strain ATCC 42149 / RIB 40) (Yellow koji mold).